Reading from the N-terminus, the 245-residue chain is Probable phosphatase YcdX (245 aa).

9 residues coordinate Zn(2+): His7, His9, His15, His40, Glu73, His101, His131, Asp192, and His194.

It belongs to the PHP family. In terms of assembly, homotrimer. It depends on Zn(2+) as a cofactor.

In Salmonella agona (strain SL483), this protein is Probable phosphatase YcdX.